Here is a 689-residue protein sequence, read N- to C-terminus: Homoaconitase, mitochondrial (689 aa).

The transit peptide at 1-17 (MVVLRRSFHVYTRLQRG) directs the protein to the mitochondrion. 3 residues coordinate [4Fe-4S] cluster: Cys336, Cys403, and Cys406.

It belongs to the aconitase/IPM isomerase family. [4Fe-4S] cluster is required as a cofactor.

Its subcellular location is the mitochondrion. It carries out the reaction (2R,3S)-homoisocitrate = cis-homoaconitate + H2O. The protein operates within amino-acid biosynthesis; L-lysine biosynthesis via AAA pathway; L-alpha-aminoadipate from 2-oxoglutarate: step 3/5. Catalyzes the reversible hydration of cis-homoaconitate to (2R,3S)-homoisocitrate, a step in the alpha-aminoadipate pathway for lysine biosynthesis. The chain is Homoaconitase, mitochondrial (LYS4) from Candida glabrata (strain ATCC 2001 / BCRC 20586 / JCM 3761 / NBRC 0622 / NRRL Y-65 / CBS 138) (Yeast).